Here is a 184-residue protein sequence, read N- to C-terminus: NADH-quinone oxidoreductase subunit B (184 aa).

Positions 37, 38, 103, and 132 each coordinate [4Fe-4S] cluster.

Belongs to the complex I 20 kDa subunit family. In terms of assembly, NDH-1 is composed of 14 different subunits. Subunits NuoB, C, D, E, F, and G constitute the peripheral sector of the complex. [4Fe-4S] cluster is required as a cofactor.

It is found in the cell membrane. The enzyme catalyses a quinone + NADH + 5 H(+)(in) = a quinol + NAD(+) + 4 H(+)(out). Its function is as follows. NDH-1 shuttles electrons from NADH, via FMN and iron-sulfur (Fe-S) centers, to quinones in the respiratory chain. The immediate electron acceptor for the enzyme in this species is believed to be a menaquinone. Couples the redox reaction to proton translocation (for every two electrons transferred, four hydrogen ions are translocated across the cytoplasmic membrane), and thus conserves the redox energy in a proton gradient. The polypeptide is NADH-quinone oxidoreductase subunit B (Mycobacterium sp. (strain JLS)).